We begin with the raw amino-acid sequence, 172 residues long: Adenine phosphoribosyltransferase (172 aa).

This sequence belongs to the purine/pyrimidine phosphoribosyltransferase family. As to quaternary structure, homodimer.

Its subcellular location is the cytoplasm. It catalyses the reaction AMP + diphosphate = 5-phospho-alpha-D-ribose 1-diphosphate + adenine. It functions in the pathway purine metabolism; AMP biosynthesis via salvage pathway; AMP from adenine: step 1/1. Its function is as follows. Catalyzes a salvage reaction resulting in the formation of AMP, that is energically less costly than de novo synthesis. The protein is Adenine phosphoribosyltransferase of Microcystis aeruginosa (strain NIES-843 / IAM M-2473).